Here is a 514-residue protein sequence, read N- to C-terminus: 1-pyrroline-5-carboxylate dehydrogenase (514 aa).

Active-site residues include Glu-286 and Cys-320.

Belongs to the aldehyde dehydrogenase family. RocA subfamily.

The catalysed reaction is L-glutamate 5-semialdehyde + NAD(+) + H2O = L-glutamate + NADH + 2 H(+). It participates in amino-acid degradation; L-proline degradation into L-glutamate; L-glutamate from L-proline: step 2/2. This chain is 1-pyrroline-5-carboxylate dehydrogenase, found in Staphylococcus haemolyticus (strain JCSC1435).